The chain runs to 1597 residues: MKSDQLGRVLSDDDLPTKLSIANEFKAFVKKNSVPRDLIHPYFLTLSRAIKSREDPQLTSVCFSCFCHLFKRVSIQDKQLLDDSATVAVVTDLLIDRLSDRSTGVRATANKVLLDYWVLVPQAVAVAMRQSAVVSSSHVTLGESLKWLQSVFDLSSAFNFSAFVQPVVDMLRYPQLQSSVCELLKKVYSVSDRRELEECLAATGVNEMLKKSILNGLPGGNSSSAVSDPKTTAPRSLSSQKSVASKPAQQPNSQEPGNENAPSSSLAFLNSLPNFRVDSLAPENVYSASDLESKINNMHVAFADKESEKNWSLREKHVTQIRKLLRGNALQDYPSQFAAAYKSVIDGVLKSATSLRTTLSNQGLLLVKESGQLGGNAFVDPVMDIVFPQIIRLTGQMKKITSNNAHITVCGLLTSATFSTKLINHVTSATVEKNAQPRTFAAVWLRILILSHSQTHKSAMQNHGGLDQIEKAIAKGLQDPTPSVKENMRVTYWSFAEYWPSEADKIYRKLDTKAKAMLDKVNPSGAKNAPIKKPAPRESLKEVMRRSRESSVNRDANAPSATAPPQRAKMGAPQRTSSGLVGRSLSGSNLTDRSNRLSSTSTSSRDQQRAVSDSTRPTQMTRPVSGRLSREPSLTRSSRDQSLTRSSRETVSREPSLTRGSRELPKQRVDQNRQRVPSISRDSRYGQRPVGSRESSRQSRESSLDPSRESSLAPSVHSSTAISRESSLPRDDLPSYDVEMDEDDPFVTQQLKLSLKQEDAMSQPEETMNEVTTAEATATTAPMKIPKSTPPRESTPPNSSPFVLAKSPATQGVSTSPATGKSASPPATAEDELSRDLNGESKHLKEVDDDNGSMDADERIESDVVMGDAEESAANFEPSEVEPAGVQLGLKSPKRETPTSALQGNEQAEPESHDAVADSQSHGADSADLQSEPRNVPVSPPTTSDASNVPILSPRPIHPAKFELDSDAMIVDEVAPEVNTVIDAQTQAEETPTEEIPAVVKVGFDAEAKSEPTEQTEAVKTSDTATEPGEPVDIPNSEQGPSTEPTELAKSAGSVEHVTEAIQEDPFGDALPAKQENGAKASDEIETDHTKSNNTESDGPVSAHDESEPMEICDSDNDAVDNGTNPDTKCQDQQDSTTPPMDFSSHDLKDELNTSSPESLTALLSNPDQYKEILDHVPAELFLLCVILFSESHVMDAQSVISRDTNLALSTASSMVMVCARDVYPSDSRWSQATVEELKHVTVTCLEWLTKLVNESSEASTLLATNKRYRTSLVHLLSTSVELHKQKFGDVTHNSLIHVIESMDKLSQRPPDKRTSRAFLEAPSPSPDSSLVEDVTDKLSHVTVKENFKTIRILPPQLASGQLIFPGSEVTWSKLELERLARSPSCSDSNEAILDAVSRDKVSVTQLSTLASRIPELEDVDLVTATILAYLHISHPPALTTAALVAIKQVLIKPELKLSMGHVTEIFSTLNHVNSHIDSRSPLAAAIEELVADLLTHTDSSEMLEFLLLSRSRDSKTQNKLLLLNTVYHVITPDLLPSYETQLLALITELISDPDPLVRRVTVGLVVRVLRVSPEMEGTISLAIKSKMDLVRYYMGA.

Disordered stretches follow at residues 220-265 (GNSS…PSSS), 519-958 (DKVN…RPIH), 1005-1154 (DAEA…ELNT), and 1307-1332 (SQRP…SSLV). The segment covering 535 to 552 (APRESLKEVMRRSRESSV) has biased composition (basic and acidic residues). The segment covering 577–605 (SSGLVGRSLSGSNLTDRSNRLSSTSTSSR) has biased composition (low complexity). Polar residues-rich tracts occupy residues 610-622 (AVSD…QMTR) and 632-645 (PSLT…SLTR). Composition is skewed to basic and acidic residues over residues 660–673 (GSRE…DQNR) and 694–708 (ESSR…DPSR). A compositionally biased stretch (polar residues) spans 709 to 726 (ESSLAPSVHSSTAISRES). Positions 765–781 (EETMNEVTTAEATATTA) are enriched in low complexity. Polar residues-rich tracts occupy residues 791–801 (PRESTPPNSSP) and 808–822 (PATQ…TGKS). A compositionally biased stretch (basic and acidic residues) spans 832–846 (ELSRDLNGESKHLKE). Composition is skewed to polar residues over residues 918-933 (DSQS…QSEP), 1013-1025 (TEQT…SDTA), and 1036-1045 (NSEQGPSTEP). A compositionally biased stretch (basic and acidic residues) spans 1081–1091 (ASDEIETDHTK). Acidic residues predominate over residues 1108–1119 (EPMEICDSDNDA). Positions 1122 to 1139 (NGTNPDTKCQDQQDSTTP) are enriched in polar residues. One copy of the HEAT repeat lies at 1537 to 1573 (PSYETQLLALITELISDPDPLVRRVTVGLVVRVLRVS).

Belongs to the CLASP family. Interacts with microtubules.

It is found in the cytoplasm. It localises to the cytoskeleton. The protein localises to the nucleus. The protein resides in the spindle. Functionally, microtubule binding protein that promotes the stabilization of dynamic microtubules. Required for mitotic spindle formation. The polypeptide is Protein STU1 (STU1) (Yarrowia lipolytica (strain CLIB 122 / E 150) (Yeast)).